Reading from the N-terminus, the 358-residue chain is Mannonate dehydratase (358 aa).

This sequence belongs to the mannonate dehydratase family. The cofactor is Fe(2+). Requires Mn(2+) as cofactor.

It catalyses the reaction D-mannonate = 2-dehydro-3-deoxy-D-gluconate + H2O. It participates in carbohydrate metabolism; pentose and glucuronate interconversion. Catalyzes the dehydration of D-mannonate. This Lachnoclostridium phytofermentans (strain ATCC 700394 / DSM 18823 / ISDg) (Clostridium phytofermentans) protein is Mannonate dehydratase.